Consider the following 37-residue polypeptide: Photosystem II reaction center protein L (37 aa).

Over 1–13 (MEPNPNRQPVELN) the chain is Cytoplasmic. Residues 14–35 (RTSLYLGLLLILVLALLFSSYF) form a helical membrane-spanning segment. Residues 36 to 37 (FN) are Lumenal-facing.

As to quaternary structure, PSII is composed of 1 copy each of membrane proteins PsbA, PsbB, PsbC, PsbD, PsbE, PsbF, PsbH, PsbI, PsbJ, PsbK, PsbL, PsbM, PsbT, PsbX, PsbY, PsbZ, Psb30/Ycf12, peripheral proteins PsbO, CyanoQ (PsbQ), PsbU, PsbV and a large number of cofactors. It forms dimeric complexes. Part of a photosystem II (PSII) assembly intermediate complex PSII-I; crystallized from a strain deleted of psbJ, it forms monomeric PSII before addition of the oxygen evolving complex. PSII-I includes 3 assembly factors not found in mature PSII (Psb27, Psb28 and Psb34). PSII binds multiple chlorophylls, carotenoids and specific lipids. serves as cofactor.

The protein resides in the cellular thylakoid membrane. Functionally, one of the components of the core complex of photosystem II (PSII). PSII is a light-driven water:plastoquinone oxidoreductase that uses light energy to abstract electrons from H(2)O, generating O(2) and a proton gradient subsequently used for ATP formation. It consists of a core antenna complex that captures photons, and an electron transfer chain that converts photonic excitation into a charge separation. This subunit is found at the monomer-monomer interface and is required for correct PSII assembly and/or dimerization. This subunit may make specific contacts with lipid(s). The sequence is that of Photosystem II reaction center protein L from Thermosynechococcus vestitus (strain NIES-2133 / IAM M-273 / BP-1).